Reading from the N-terminus, the 123-residue chain is Large ribosomal subunit protein uL14 (123 aa).

This sequence belongs to the universal ribosomal protein uL14 family. In terms of assembly, part of the 50S ribosomal subunit. Forms a cluster with proteins L3 and L19. In the 70S ribosome, L14 and L19 interact and together make contacts with the 16S rRNA in bridges B5 and B8.

In terms of biological role, binds to 23S rRNA. Forms part of two intersubunit bridges in the 70S ribosome. This is Large ribosomal subunit protein uL14 from Aliivibrio fischeri (strain ATCC 700601 / ES114) (Vibrio fischeri).